Consider the following 603-residue polypeptide: Elongation factor 4 (603 aa).

In terms of domain architecture, tr-type G spans 7 to 189; sequence VRIRNFCIIA…AVVERVPPPP (183 aa). GTP is bound by residues 19 to 24 and 136 to 139; these read DHGKST and NKID.

Belongs to the TRAFAC class translation factor GTPase superfamily. Classic translation factor GTPase family. LepA subfamily.

The protein resides in the cell inner membrane. It catalyses the reaction GTP + H2O = GDP + phosphate + H(+). Its function is as follows. Required for accurate and efficient protein synthesis under certain stress conditions. May act as a fidelity factor of the translation reaction, by catalyzing a one-codon backward translocation of tRNAs on improperly translocated ribosomes. Back-translocation proceeds from a post-translocation (POST) complex to a pre-translocation (PRE) complex, thus giving elongation factor G a second chance to translocate the tRNAs correctly. Binds to ribosomes in a GTP-dependent manner. This is Elongation factor 4 from Nostoc sp. (strain PCC 7120 / SAG 25.82 / UTEX 2576).